Here is a 703-residue protein sequence, read N- to C-terminus: Heat shock protein 75 kDa, mitochondrial (703 aa).

Residues 1–56 (MARELRMLLLWGRRLRAPALAAACGGKPVLCPWRPPAQSWGPPRSLASSFHVGRPF) constitute a mitochondrion transit peptide. ATP contacts are provided by Asn118 and Asp157. A Phosphoserine modification is found at Ser169. Position 170 (Asn170) interacts with ATP. Thr173 is modified (phosphothreonine). Phe204 and Arg401 together coordinate ATP. Residues Lys423, Lys430, and Lys465 each carry the N6-acetyllysine modification. Residue Thr493 is modified to Phosphothreonine.

Belongs to the heat shock protein 90 family. Binds to the intracellular domain of tumor necrosis factor type 1 receptor. Binds to RB1. Interacts with SRC. Interacts with SDHA.

The protein localises to the mitochondrion. Its subcellular location is the mitochondrion inner membrane. It is found in the mitochondrion matrix. Functionally, chaperone that expresses an ATPase activity. Involved in maintaining mitochondrial function and polarization, downstream of PINK1 and mitochondrial complex I. Is a negative regulator of mitochondrial respiration able to modulate the balance between oxidative phosphorylation and aerobic glycolysis. The impact of TRAP1 on mitochondrial respiration is probably mediated by modulation of mitochondrial SRC and inhibition of SDHA. The polypeptide is Heat shock protein 75 kDa, mitochondrial (TRAP1) (Bos taurus (Bovine)).